Reading from the N-terminus, the 260-residue chain is MVKGKSKKVVTSTIQEENVSKEPLAPIVPIVPDILRNEEELVFIEIEKRDKNEIVNVPITQTNPVVQTNNKTNNKNNINNNNNNNNNNNNNNINNNNKNNKVKKTTTTTKKNNEKSNEKQKSVKFANKINESRSARADLTFPVSRIEKMIREGRFTKRCSSDAPVFLAAVLEYLTLEILELSITYANQKNKTRITPQHIHLSICCDAELNDLLKNVTIANGGVPKFIHPILLDTPKKKGHQQNMNENDISKEKDIKSSKN.

2 disordered regions span residues 65 to 122 (VVQT…KQKS) and 236 to 260 (KKKGHQQNMNENDISKEKDIKSSKN). Over residues 67-110 (QTNNKTNNKNNINNNNNNNNNNNNNNINNNNKNNKVKKTTTTTK) the composition is skewed to low complexity. Basic and acidic residues-rich tracts occupy residues 111 to 121 (KNNEKSNEKQK) and 248 to 260 (DISKEKDIKSSKN).

Belongs to the histone H2A family.

The sequence is that of Histone H2A.v1 (H2Av1) from Dictyostelium discoideum (Social amoeba).